The following is a 154-amino-acid chain: UPF0547 protein C16orf87 homolog (154 aa).

Residues His46–Glu119 are disordered. Residues Val68–Arg84 show a composition bias toward basic and acidic residues. The residue at position 91 (Ser91) is a Phosphoserine. A coiled-coil region spans residues Lys104 to Lys132. A compositionally biased stretch (basic and acidic residues) spans Lys109–Glu119.

It belongs to the UPF0547 family.

The chain is UPF0547 protein C16orf87 homolog from Bos taurus (Bovine).